Reading from the N-terminus, the 435-residue chain is Xylose isomerase (435 aa).

Active-site residues include His-100 and Asp-103. Mg(2+) is bound by residues Glu-231, Glu-267, His-270, Asp-295, Asp-306, Asp-308, and Asp-338.

It belongs to the xylose isomerase family. Homotetramer. Mg(2+) is required as a cofactor.

The protein resides in the cytoplasm. It catalyses the reaction alpha-D-xylose = alpha-D-xylulofuranose. This Brucella ovis (strain ATCC 25840 / 63/290 / NCTC 10512) protein is Xylose isomerase.